The primary structure comprises 236 residues: MTRRYWNINLEEMMDAGIHFGHGTRKWNPKMAPYISAKRKGIHIINLTRTARFLSEACDLVFDAASRGKQFLIVGTKNKAADSVAQAAIKARCHYVNKKWLGGMLTNWYTTETRLHKFRDLRTEQKTGRLKRLPKRDAAVLKRQISHLQTYLGGIKYMTGLPDIVIIVDQQEEYTALQECITLRIPTICLIDTNCDPDLADISIPANDDAIASIRLILNKLVFAICEGRSSYIRNS.

The protein belongs to the universal ribosomal protein uS2 family.

The protein localises to the plastid. The protein resides in the chloroplast. In Morus indica (Mulberry), this protein is Small ribosomal subunit protein uS2c (rps2).